We begin with the raw amino-acid sequence, 211 residues long: FMN-dependent NADH:quinone oxidoreductase 3 (211 aa).

17 to 19 (SFS) provides a ligand contact to FMN.

Belongs to the azoreductase type 1 family. Homodimer. FMN serves as cofactor.

It catalyses the reaction 2 a quinone + NADH + H(+) = 2 a 1,4-benzosemiquinone + NAD(+). The enzyme catalyses N,N-dimethyl-1,4-phenylenediamine + anthranilate + 2 NAD(+) = 2-(4-dimethylaminophenyl)diazenylbenzoate + 2 NADH + 2 H(+). Its function is as follows. Quinone reductase that provides resistance to thiol-specific stress caused by electrophilic quinones. Functionally, also exhibits azoreductase activity. Catalyzes the reductive cleavage of the azo bond in aromatic azo compounds to the corresponding amines. The chain is FMN-dependent NADH:quinone oxidoreductase 3 from Halalkalibacterium halodurans (strain ATCC BAA-125 / DSM 18197 / FERM 7344 / JCM 9153 / C-125) (Bacillus halodurans).